Consider the following 123-residue polypeptide: Late histone H2B.L3 (123 aa).

Residues 1-10 (MPAKAQAAGK) are compositionally biased toward low complexity. The interval 1-32 (MPAKAQAAGKKGSKKAKAPKPSGDKKRRRKRK) is disordered. Residue S110 is glycosylated (O-linked (GlcNAc) serine). A Glycyl lysine isopeptide (Lys-Gly) (interchain with G-Cter in ubiquitin) cross-link involves residue K118.

This sequence belongs to the histone H2B family. In terms of assembly, the nucleosome is a histone octamer containing two molecules each of H2A, H2B, H3 and H4 assembled in one H3-H4 heterotetramer and two H2A-H2B heterodimers. The octamer wraps approximately 147 bp of DNA. Post-translationally, monoubiquitination of Lys-118 gives a specific tag for epigenetic transcriptional activation and is also prerequisite for histone H3 'Lys-4' and 'Lys-79' methylation. GlcNAcylation at Ser-110 promotes monoubiquitination of Lys-118. It fluctuates in response to extracellular glucose, and associates with transcribed genes.

The protein resides in the nucleus. The protein localises to the chromosome. Its function is as follows. Core component of nucleosome. Nucleosomes wrap and compact DNA into chromatin, limiting DNA accessibility to the cellular machineries which require DNA as a template. Histones thereby play a central role in transcription regulation, DNA repair, DNA replication and chromosomal stability. DNA accessibility is regulated via a complex set of post-translational modifications of histones, also called histone code, and nucleosome remodeling. The sequence is that of Late histone H2B.L3 from Strongylocentrotus purpuratus (Purple sea urchin).